Consider the following 283-residue polypeptide: Cyclin-C (283 aa).

The Cyclin N-terminal domain occupies 46–144 (NVIQALGEHL…ILECEFYLLE (99 aa)). The disordered stretch occupies residues 252–283 (TILNKMPKPKPPPNSEGEQGTNGSQSSGYSQS). A compositionally biased stretch (polar residues) spans 267-283 (EGEQGTNGSQSSGYSQS).

Belongs to the cyclin family. Cyclin C subfamily. In terms of assembly, component of the Mediator complex. The cylin/CDK pair formed by ccnc/cdk8 also associates with the large subunit of RNA polymerase II.

The protein localises to the nucleus. Functionally, component of the Mediator complex, a coactivator involved in regulated gene transcription of nearly all RNA polymerase II-dependent genes. Mediator functions as a bridge to convey information from gene-specific regulatory proteins to the basal RNA polymerase II transcription machinery. Mediator is recruited to promoters by direct interactions with regulatory proteins and serves as a scaffold for the assembly of a functional preinitiation complex with RNA polymerase II and the general transcription factors. Binds to and activates cyclin-dependent kinase cdk8 that phosphorylates the CTD (C-terminal domain) of the large subunit of RNA polymerase II (RNAp II), which may inhibit the formation of a transcription initiation complex. The polypeptide is Cyclin-C (ccnc) (Xenopus tropicalis (Western clawed frog)).